The chain runs to 183 residues: Threonylcarbamoyl-AMP synthase (183 aa).

One can recognise a YrdC-like domain in the interval 1–183 (MNREQIAEAL…LRTNQLFRQG (183 aa)).

This sequence belongs to the SUA5 family. TsaC subfamily.

It is found in the cytoplasm. The enzyme catalyses L-threonine + hydrogencarbonate + ATP = L-threonylcarbamoyladenylate + diphosphate + H2O. Functionally, required for the formation of a threonylcarbamoyl group on adenosine at position 37 (t(6)A37) in tRNAs that read codons beginning with adenine. Catalyzes the conversion of L-threonine, HCO(3)(-)/CO(2) and ATP to give threonylcarbamoyl-AMP (TC-AMP) as the acyladenylate intermediate, with the release of diphosphate. This Haemophilus influenzae (strain 86-028NP) protein is Threonylcarbamoyl-AMP synthase.